A 414-amino-acid chain; its full sequence is TAR DNA-binding protein 43 (414 aa).

Glycyl lysine isopeptide (Lys-Gly) (interchain with G-Cter in SUMO2) cross-links involve residues Lys-79, Lys-84, Lys-95, Lys-102, and Lys-181. 2 consecutive RRM domains span residues 104–200 and 191–262; these read SDLI…RCTE and RKVF…NAEP. A Phosphoserine modification is found at Ser-183. An interaction with UBQLN2 region spans residues 216-414; the sequence is EVVDVFIPKP…MDSKSSGWGM (199 aa). Over residues 261 to 274 the composition is skewed to basic and acidic residues; it reads EPKHNSNRQLERSG. 2 disordered regions span residues 261–301 and 341–414; these read EPKH…GLGN and ASQQ…GWGM. Residue Lys-263 forms a Glycyl lysine isopeptide (Lys-Gly) (interchain with G-Cter in SUMO2) linkage. Residues 275–301 are compositionally biased toward gly residues; it reads RFGGNPGGFGNQGGFGNSRGGGAGLGN. A Phosphoserine modification is found at Ser-292. An Omega-N-methylarginine modification is found at Arg-293. 2 stretches are compositionally biased toward low complexity: residues 342-358 and 368-392; these read SQQN…SQGS and GSGN…SNAG. Residues 393-402 show a composition bias toward gly residues; that stretch reads SGSGFNGGFG. The span at 405 to 414 shows a compositional bias: polar residues; that stretch reads MDSKSSGWGM.

As to quaternary structure, homodimer. Homooligomer (via its N-terminal domain). Interacts with BRDT. Binds specifically to pyrimidine-rich motifs of TAR DNA and to single stranded TG repeated sequences. Binds to RNA, specifically to UG repeated sequences with a minimum of six contiguous repeats. Interacts with ATXN2; the interaction is RNA-dependent. Interacts with MATR3. Interacts with UBQLN2. Interacts with HNRNPA2B1. Interacts with ZNF106. Interacts with CNOT7/CAF1. Interacts with CRY2. Interacts with PPIA/CYPA; the interaction is dependent on RNA-binding activity of TARDBP and PPIase activity of PPIA/CYPA. Acetylation of PPIA/CYPA at 'Lys-125' favors the interaction of TARDBP with PPIA/CYPA. Post-translationally, hyperphosphorylated. Ubiquitinated.

It localises to the nucleus. It is found in the cytoplasm. The protein localises to the stress granule. Its subcellular location is the mitochondrion. RNA-binding protein that is involved in various steps of RNA biogenesis and processing. Preferentially binds, via its two RNA recognition motifs RRM1 and RRM2, to GU-repeats on RNA molecules predominantly localized within long introns and in the 3'UTR of mRNAs. In turn, regulates the splicing of many non-coding and protein-coding RNAs including proteins involved in neuronal survival, as well as mRNAs that encode proteins relevant for neurodegenerative diseases. Plays a role in maintaining mitochondrial homeostasis by regulating the processing of mitochondrial transcripts. Also regulates mRNA stability by recruiting CNOT7/CAF1 deadenylase on mRNA 3'UTR leading to poly(A) tail deadenylation and thus shortening. In response to oxidative insult, associates with stalled ribosomes localized to stress granules (SGs) and contributes to cell survival. Also participates in the normal skeletal muscle formation and regeneration, forming cytoplasmic myo-granules and binding mRNAs that encode sarcomeric proteins. Plays a role in the maintenance of the circadian clock periodicity via stabilization of the CRY1 and CRY2 proteins in a FBXL3-dependent manner. Negatively regulates the expression of CDK6. Regulates the expression of HDAC6, ATG7 and VCP in a PPIA/CYPA-dependent manner. The protein is TAR DNA-binding protein 43 (Tardbp) of Mus musculus (Mouse).